Reading from the N-terminus, the 225-residue chain is Small ribosomal subunit protein uS5 (225 aa).

Positions 57–120 (LEEQVLDVKL…AQAKLSLIKV (64 aa)) constitute an S5 DRBM domain.

It belongs to the universal ribosomal protein uS5 family. In terms of assembly, part of the 30S ribosomal subunit. Contacts protein S4.

Functionally, with S4 and S12 plays an important role in translational accuracy. The sequence is that of Small ribosomal subunit protein uS5 from Methanococcus vannielii (strain ATCC 35089 / DSM 1224 / JCM 13029 / OCM 148 / SB).